The following is a 23-amino-acid chain: Aurein-4.4 (23 aa).

The protein belongs to the frog skin active peptide (FSAP) family. Aurein subfamily. Expressed by the skin dorsal glands.

The protein resides in the secreted. In terms of biological role, has no antimicrobial or anticancer activity. This Ranoidea aurea (Green and golden bell frog) protein is Aurein-4.4.